A 328-amino-acid polypeptide reads, in one-letter code: Phosphate acyltransferase (328 aa).

This sequence belongs to the PlsX family. In terms of assembly, homodimer. Probably interacts with PlsY.

Its subcellular location is the cytoplasm. The enzyme catalyses a fatty acyl-[ACP] + phosphate = an acyl phosphate + holo-[ACP]. It functions in the pathway lipid metabolism; phospholipid metabolism. Functionally, catalyzes the reversible formation of acyl-phosphate (acyl-PO(4)) from acyl-[acyl-carrier-protein] (acyl-ACP). This enzyme utilizes acyl-ACP as fatty acyl donor, but not acyl-CoA. The polypeptide is Phosphate acyltransferase (Staphylococcus aureus (strain MRSA252)).